A 299-amino-acid polypeptide reads, in one-letter code: Protein charybde (299 aa).

The tract at residues 73-103 (LNTRPSATPPSAGGGGPLAGGGSVGMTTPKQ) is disordered. The span at 84–96 (AGGGGPLAGGGSV) shows a compositional bias: gly residues.

The protein belongs to the DDIT4 family.

It localises to the cytoplasm. Inhibits cell growth by regulating the Tor pathway upstream of the Tsc1-Tsc2 complex and downstream of Akt1. Acts as a cell death activator during head development. The chain is Protein charybde (chrb) from Drosophila melanogaster (Fruit fly).